A 491-amino-acid chain; its full sequence is MKYKNLRDFLELLEKQGELKRITQEIDPYLEMTEIADRTLRAGGPALLFENPKGYEIPVLCNLFGTPKRVALGMGQEDVTALRDVGRLLAFLKEPEQPKSFKDLWSTLPQFKQVLNMPTKVLSKAECQQIVFSDAEVDLYKLPIMHCWKDDVAPLVTWGLTITKGPSKKRQNLGIYRQQLIGKNKLIMRWLSHRGGALDFQEWKEARPNQPFPISVALGADPATILGAVTPVPDTLSEYAFAGLLRGNKTEVVKSISNDLEIPASAEIILEGYIDPTETALEGPYGDHTGYYNEQEYFPVFTVTHLTMRKDPIYHSTYTGRPPDEPAVLGEALNEVFIPILQKQFPEIVDFYLPPEGCSYRLAVVTIKKQYAGHAKRVMMGVWSFLRQFMYTKFVIVCDDDINARDWKDVIWAITTRSDPARDCTIIENTPIDYLDFASPIAGLGSKMGIDATNKWIGETQREWGTPIKKAPNVVKRIDDIWESLNIFAPK.

A Mn(2+)-binding site is contributed by Asn-172. Prenylated FMN-binding positions include 175–177 (IYR), 189–191 (RWL), and 194–195 (RG). Glu-238 is a binding site for Mn(2+). The active-site Proton donor is the Asp-287.

It belongs to the UbiD family. In terms of assembly, homohexamer. It depends on prenylated FMN as a cofactor. Mn(2+) serves as cofactor.

It localises to the cell membrane. The catalysed reaction is a 4-hydroxy-3-(all-trans-polyprenyl)benzoate + H(+) = a 2-(all-trans-polyprenyl)phenol + CO2. Its pathway is cofactor biosynthesis; ubiquinone biosynthesis. Its function is as follows. Catalyzes the decarboxylation of 3-octaprenyl-4-hydroxy benzoate to 2-octaprenylphenol, an intermediate step in ubiquinone biosynthesis. This chain is 3-octaprenyl-4-hydroxybenzoate carboxy-lyase, found in Histophilus somni (strain 129Pt) (Haemophilus somnus).